The following is a 460-amino-acid chain: DNA repair protein RadA (460 aa).

The C4-type zinc finger occupies 11–28; that stretch reads CNECGADYPRWQGQCSAC. 102-109 serves as a coordination point for ATP; it reads GNPGAGKS. A RadA KNRFG motif motif is present at residues 258–262; it reads KNRFG. A lon-protease-like region spans residues 357 to 460; that stretch reads DVFVNVVGGV…ADALSVFDDL (104 aa).

The protein belongs to the RecA family. RadA subfamily.

Its function is as follows. DNA-dependent ATPase involved in processing of recombination intermediates, plays a role in repairing DNA breaks. Stimulates the branch migration of RecA-mediated strand transfer reactions, allowing the 3' invading strand to extend heteroduplex DNA faster. Binds ssDNA in the presence of ADP but not other nucleotides, has ATPase activity that is stimulated by ssDNA and various branched DNA structures, but inhibited by SSB. Does not have RecA's homology-searching function. This Salmonella typhimurium (strain LT2 / SGSC1412 / ATCC 700720) protein is DNA repair protein RadA.